The sequence spans 138 residues: Beta-lactamase HcpB (138 aa).

TPR repeat units lie at residues 1–28, 57–94, and 97–130; these read MVGGGTVKKDLKKAIQYYVKACELNEMF, GNGCRFLGDFYENGKYVKKDLRKAAQYYSKACGLNDQD, and LILGYKQYAGKGVVKNEKQAVKTFEKACRLGSED. Intrachain disulfides connect cysteine 22-cysteine 30, cysteine 52-cysteine 60, cysteine 88-cysteine 96, and cysteine 124-cysteine 132.

This sequence belongs to the hcp beta-lactamase family.

The enzyme catalyses a beta-lactam + H2O = a substituted beta-amino acid. Functionally, hydrolyzes 6-aminopenicillinic acid and 7-aminocephalosporanic acid (ACA) derivatives. This is Beta-lactamase HcpB (hcpB) from Helicobacter pylori (strain ATCC 700392 / 26695) (Campylobacter pylori).